A 432-amino-acid polypeptide reads, in one-letter code: Adenylosuccinate synthetase 2 (432 aa).

GTP is bound by residues 13–19 and 41–43; these read GDEGKGK and GHT. The active-site Proton acceptor is aspartate 14. The Mg(2+) site is built by aspartate 14 and glycine 41. IMP is bound by residues 14-17, 39-42, threonine 130, arginine 144, glutamine 225, threonine 240, and arginine 304; these read DEGK and NAGH. The active-site Proton donor is the histidine 42. 300-306 provides a ligand contact to substrate; sequence ATTGRSR. GTP-binding positions include arginine 306, 332 to 334, and 415 to 417; these read KLD and STG.

It belongs to the adenylosuccinate synthetase family. In terms of assembly, homodimer. It depends on Mg(2+) as a cofactor.

The protein localises to the cytoplasm. The enzyme catalyses IMP + L-aspartate + GTP = N(6)-(1,2-dicarboxyethyl)-AMP + GDP + phosphate + 2 H(+). Its pathway is purine metabolism; AMP biosynthesis via de novo pathway; AMP from IMP: step 1/2. In terms of biological role, plays an important role in the de novo pathway of purine nucleotide biosynthesis. Catalyzes the first committed step in the biosynthesis of AMP from IMP. The protein is Adenylosuccinate synthetase 2 of Photorhabdus laumondii subsp. laumondii (strain DSM 15139 / CIP 105565 / TT01) (Photorhabdus luminescens subsp. laumondii).